Here is a 390-residue protein sequence, read N- to C-terminus: tRNA (guanine(9)-N1)-methyltransferase (390 aa).

A disordered region spans residues M1–A72. The segment covering A43–R59 has biased composition (basic and acidic residues). The region spanning K92 to P340 is the SAM-dependent MTase TRM10-type domain. S-adenosyl-L-methionine contacts are provided by residues L246–S247, G266, D270–H274, C278, L292, and K305–L307. D270 (proton acceptor) is an active-site residue. Residues K343–Q390 form a disordered region. A compositionally biased stretch (basic and acidic residues) spans A347–K356. Residues E357–Q390 are compositionally biased toward acidic residues.

Belongs to the class IV-like SAM-binding methyltransferase superfamily. TRM10 family. Monomer.

The protein resides in the cytoplasm. The protein localises to the nucleus. The enzyme catalyses guanosine(9) in tRNA + S-adenosyl-L-methionine = N(1)-methylguanosine(9) in tRNA + S-adenosyl-L-homocysteine + H(+). S-adenosyl-L-methionine-dependent guanine N(1)-methyltransferase that catalyzes the formation of N(1)-methylguanine at position 9 (m1G9) in cytoplasmic tRNA. This Cryptococcus neoformans var. neoformans serotype D (strain JEC21 / ATCC MYA-565) (Filobasidiella neoformans) protein is tRNA (guanine(9)-N1)-methyltransferase.